The primary structure comprises 223 residues: Putative C-type lectin protein 51 (223 aa).

An N-terminal signal peptide occupies residues 1 to 31 (MAKRINFTSCLIFTSCFTAFIVSLCLLVSSC). The 108-residue stretch at 111-218 (QEGRCYHYSR…CDTPRRCLCG (108 aa)) folds into the C-type lectin domain. C193 and C209 are joined by a disulfide.

This chain is Putative C-type lectin protein 51 (51), found in Equine herpesvirus 2 (strain 86/87) (EHV-2).